The following is a 433-amino-acid chain: ATP-dependent protease ATPase subunit HslU (433 aa).

Residues valine 18, 60 to 65 (GVGKTE), aspartate 246, glutamate 311, and arginine 383 contribute to the ATP site.

It belongs to the ClpX chaperone family. HslU subfamily. As to quaternary structure, a double ring-shaped homohexamer of HslV is capped on each side by a ring-shaped HslU homohexamer. The assembly of the HslU/HslV complex is dependent on binding of ATP.

The protein resides in the cytoplasm. ATPase subunit of a proteasome-like degradation complex; this subunit has chaperone activity. The binding of ATP and its subsequent hydrolysis by HslU are essential for unfolding of protein substrates subsequently hydrolyzed by HslV. HslU recognizes the N-terminal part of its protein substrates and unfolds these before they are guided to HslV for hydrolysis. The chain is ATP-dependent protease ATPase subunit HslU from Rhodopseudomonas palustris (strain HaA2).